We begin with the raw amino-acid sequence, 138 residues long: Cysteine desulfuration protein SufE (138 aa).

The active-site Cysteine persulfide intermediate is the C51.

The protein belongs to the SufE family. In terms of assembly, homodimer. Interacts with SufS.

Its subcellular location is the cytoplasm. It participates in cofactor biosynthesis; iron-sulfur cluster biosynthesis. Participates in cysteine desulfuration mediated by SufS. Cysteine desulfuration mobilizes sulfur from L-cysteine to yield L-alanine and constitutes an essential step in sulfur metabolism for biosynthesis of a variety of sulfur-containing biomolecules. Functions as a sulfur acceptor for SufS, by mediating the direct transfer of the sulfur atom from the S-sulfanylcysteine of SufS, an intermediate product of cysteine desulfuration process. The protein is Cysteine desulfuration protein SufE of Escherichia coli (strain K12 / MC4100 / BW2952).